The following is a 66-amino-acid chain: Large ribosomal subunit protein bL32 (66 aa).

Over residues 1 to 18 the composition is skewed to basic residues; that stretch reads MAIVPKRKTSKQRKHKRR. The disordered stretch occupies residues 1–21; sequence MAIVPKRKTSKQRKHKRRTND.

The protein belongs to the bacterial ribosomal protein bL32 family.

The sequence is that of Large ribosomal subunit protein bL32 from Mycoplasmopsis agalactiae (strain NCTC 10123 / CIP 59.7 / PG2) (Mycoplasma agalactiae).